Reading from the N-terminus, the 145-residue chain is MSLLLPPLALLLLLAALVAPATAATAYRPDWNRLSGLTRARVETCGGUQLNRLKEVKAFVTQDIPFYHNLVMKHLPGADPELVLLGRRYEELERIPLSEMTREEINALVQELGFYRKAAPDAQVPPEYVWAPAKPPEETSDHADL.

An N-terminal signal peptide occupies residues 1–23; sequence MSLLLPPLALLLLLAALVAPATA. Residues C45 and U48 each act as nucleophile in the active site. A cross-link (cysteinyl-selenocysteine (Cys-Sec)) is located at residues 45–48; the sequence is CGGU. Position 48 (U48) is a non-standard amino acid, selenocysteine.

Belongs to the selenoprotein M/F family. Widely expressed.

Its subcellular location is the cytoplasm. The protein resides in the perinuclear region. It localises to the endoplasmic reticulum. The protein localises to the golgi apparatus. May function as a thiol-disulfide oxidoreductase that participates in disulfide bond formation. This chain is Selenoprotein M, found in Homo sapiens (Human).